A 303-amino-acid polypeptide reads, in one-letter code: Glycosyltransferase AglJ (303 aa).

2 helical membrane-spanning segments follow: residues phenylalanine 230–valine 250 and valine 263–valine 283.

Belongs to the glycosyltransferase 2 family.

The protein resides in the cell membrane. It functions in the pathway cell surface structure biogenesis; S-layer biogenesis. Involved in the assembly of a N-linked pentasaccharide that decorates the S-layer glycoprotein and flagellins. Adds the first hexose subunit of the pentasaccharide to the dolichol phosphate carrier. The chain is Glycosyltransferase AglJ (aglJ) from Haloferax volcanii (strain ATCC 29605 / DSM 3757 / JCM 8879 / NBRC 14742 / NCIMB 2012 / VKM B-1768 / DS2) (Halobacterium volcanii).